The chain runs to 260 residues: Exosome complex component Rrp4 (260 aa).

One can recognise an S1 motif domain in the interval 59–128 (NDVVIGVVIV…SSMKIELALR (70 aa)). The KH domain maps to 136 to 194 (RTGQIVEVEPVKVPRVIGHGGSMISMLKKETNCSIFVGQNGRIWIDGKDEDIELLSKAL).

Belongs to the RRP4 family. In terms of assembly, component of the archaeal exosome complex. Forms a trimer of Rrp4 and/or Csl4 subunits. The trimer associates with a hexameric ring-like arrangement composed of 3 Rrp41-Rrp42 heterodimers.

It localises to the cytoplasm. Its function is as follows. Non-catalytic component of the exosome, which is a complex involved in RNA degradation. Increases the RNA binding and the efficiency of RNA degradation. Confers strong poly(A) specificity to the exosome. The protein is Exosome complex component Rrp4 of Methanosarcina mazei (strain ATCC BAA-159 / DSM 3647 / Goe1 / Go1 / JCM 11833 / OCM 88) (Methanosarcina frisia).